We begin with the raw amino-acid sequence, 509 residues long: Glycerol kinase (509 aa).

Residue Thr-12 coordinates ADP. Residues Thr-12, Thr-13, and Ser-14 each contribute to the ATP site. Thr-12 provides a ligand contact to sn-glycerol 3-phosphate. Residue Arg-16 participates in ADP binding. Sn-glycerol 3-phosphate-binding residues include Arg-82, Glu-83, Tyr-134, and Asp-245. Arg-82, Glu-83, Tyr-134, Asp-245, and Gln-246 together coordinate glycerol. ADP is bound by residues Thr-267 and Gly-311. The ATP site is built by Thr-267, Gly-311, Gln-315, and Gly-412. The ADP site is built by Gly-412 and Asn-416.

This sequence belongs to the FGGY kinase family.

It catalyses the reaction glycerol + ATP = sn-glycerol 3-phosphate + ADP + H(+). The protein operates within polyol metabolism; glycerol degradation via glycerol kinase pathway; sn-glycerol 3-phosphate from glycerol: step 1/1. Its activity is regulated as follows. Inhibited by fructose 1,6-bisphosphate (FBP). Functionally, key enzyme in the regulation of glycerol uptake and metabolism. Catalyzes the phosphorylation of glycerol to yield sn-glycerol 3-phosphate. This is Glycerol kinase from Rhizorhabdus wittichii (strain DSM 6014 / CCUG 31198 / JCM 15750 / NBRC 105917 / EY 4224 / RW1) (Sphingomonas wittichii).